The chain runs to 984 residues: Probable beta-galactosidase C (984 aa).

The N-terminal stretch at 1 to 23 is a signal peptide; sequence MRLLSFIYLVWLALLTGTPQVSA. 5 residues coordinate substrate: Tyr82, Asn127, Ala128, Glu129, and Asn187. Residue Glu188 is the Proton donor of the active site. Asn197 is a glycosylation site (N-linked (GlcNAc...) asparagine). Position 251 (Tyr251) interacts with substrate. A disulfide bond links Cys257 and Cys304. An N-linked (GlcNAc...) asparagine glycan is attached at Asn276. Glu287 functions as the Nucleophile in the catalytic mechanism. Tyr353 is a substrate binding site. 10 N-linked (GlcNAc...) asparagine glycosylation sites follow: Asn391, Asn421, Asn434, Asn517, Asn602, Asn677, Asn715, Asn720, Asn759, and Asn805.

This sequence belongs to the glycosyl hydrolase 35 family.

It is found in the secreted. It carries out the reaction Hydrolysis of terminal non-reducing beta-D-galactose residues in beta-D-galactosides.. Cleaves beta-linked terminal galactosyl residues from gangliosides, glycoproteins, and glycosaminoglycans. In Aspergillus flavus (strain ATCC 200026 / FGSC A1120 / IAM 13836 / NRRL 3357 / JCM 12722 / SRRC 167), this protein is Probable beta-galactosidase C (lacC).